We begin with the raw amino-acid sequence, 327 residues long: Transcription factor bHLH48 (327 aa).

A disordered region spans residues 137-179 (EPAETDSMVENQNQSYSSGKRKEREKKVKSSTKKNKSSVESDK). The region spanning 191–241 (QATDNHSLAERARREKINARMKLLQELVPGCDKIQGTALVLDEIINHVQTL) is the bHLH domain.

In terms of assembly, homodimer. Expressed in leaves, stems, and flowers.

The protein resides in the nucleus. The sequence is that of Transcription factor bHLH48 (BHLH48) from Arabidopsis thaliana (Mouse-ear cress).